The primary structure comprises 490 residues: Aspartyl/glutamyl-tRNA(Asn/Gln) amidotransferase subunit B (490 aa).

It belongs to the GatB/GatE family. GatB subfamily. Heterotrimer of A, B and C subunits.

The catalysed reaction is L-glutamyl-tRNA(Gln) + L-glutamine + ATP + H2O = L-glutaminyl-tRNA(Gln) + L-glutamate + ADP + phosphate + H(+). It carries out the reaction L-aspartyl-tRNA(Asn) + L-glutamine + ATP + H2O = L-asparaginyl-tRNA(Asn) + L-glutamate + ADP + phosphate + 2 H(+). Its function is as follows. Allows the formation of correctly charged Asn-tRNA(Asn) or Gln-tRNA(Gln) through the transamidation of misacylated Asp-tRNA(Asn) or Glu-tRNA(Gln) in organisms which lack either or both of asparaginyl-tRNA or glutaminyl-tRNA synthetases. The reaction takes place in the presence of glutamine and ATP through an activated phospho-Asp-tRNA(Asn) or phospho-Glu-tRNA(Gln). The sequence is that of Aspartyl/glutamyl-tRNA(Asn/Gln) amidotransferase subunit B from Burkholderia ambifaria (strain MC40-6).